We begin with the raw amino-acid sequence, 97 residues long: MSIRPLHDRVIVKRKEVETKSAGGIVLTGSAAAKSTRGEIIAVGKGRILENGTVQPLDVKVGDIVIFNDGYGVKSEKIDNEEVLIMSESDILAIVEA.

This sequence belongs to the GroES chaperonin family. As to quaternary structure, heptamer of 7 subunits arranged in a ring. Interacts with the chaperonin GroEL.

Its subcellular location is the cytoplasm. Its function is as follows. Together with the chaperonin GroEL, plays an essential role in assisting protein folding. The GroEL-GroES system forms a nano-cage that allows encapsulation of the non-native substrate proteins and provides a physical environment optimized to promote and accelerate protein folding. GroES binds to the apical surface of the GroEL ring, thereby capping the opening of the GroEL channel. In Klebsiella pneumoniae (strain 342), this protein is Co-chaperonin GroES.